Reading from the N-terminus, the 130-residue chain is Large ribosomal subunit protein bL12 (130 aa).

It belongs to the bacterial ribosomal protein bL12 family. Homodimer. Part of the ribosomal stalk of the 50S ribosomal subunit. Forms a multimeric L10(L12)X complex, where L10 forms an elongated spine to which 2 to 4 L12 dimers bind in a sequential fashion. Binds GTP-bound translation factors.

Its function is as follows. Forms part of the ribosomal stalk which helps the ribosome interact with GTP-bound translation factors. Is thus essential for accurate translation. The protein is Large ribosomal subunit protein bL12 of Mycolicibacterium paratuberculosis (strain ATCC BAA-968 / K-10) (Mycobacterium paratuberculosis).